The following is a 307-amino-acid chain: L-lactate dehydrogenase (307 aa).

NAD(+) contacts are provided by residues Val13, Asp34, Arg39, Tyr64, and 78 to 79 (GV). A substrate-binding site is contributed by Arg87. An NAD(+)-binding site is contributed by Ser100. 119–122 (NPVD) serves as a coordination point for substrate. Thr142 lines the NAD(+) pocket. 147-150 (DSAR) contributes to the substrate binding site. His174 (proton acceptor) is an active-site residue. A substrate-binding site is contributed by Thr224.

This sequence belongs to the LDH/MDH superfamily. LDH family. Homotetramer.

The protein localises to the cytoplasm. The catalysed reaction is (S)-lactate + NAD(+) = pyruvate + NADH + H(+). It functions in the pathway fermentation; pyruvate fermentation to lactate; (S)-lactate from pyruvate: step 1/1. Its function is as follows. Catalyzes the conversion of lactate to pyruvate. The protein is L-lactate dehydrogenase of Lactobacillus delbrueckii subsp. bulgaricus (strain ATCC BAA-365 / Lb-18).